A 776-amino-acid polypeptide reads, in one-letter code: Protein SEY1 (776 aa).

Residues 1–681 are Cytoplasmic-facing; sequence MADRSAIQLI…KRSIITTRTH (681 aa). One can recognise a GB1/RHD3-type G domain in the interval 34-263; the sequence is GLDYHVISVF…TENYYFKPQY (230 aa). Residue 44 to 51 participates in GTP binding; it reads GSQSSGKS. The chain crosses the membrane as a helical span at residues 682–702; that stretch reads IPPWIYVLLAVLGWNEFVAVI. Residues 703-705 lie on the Lumenal side of the membrane; sequence RNP. The helical transmembrane segment at 706 to 726 threads the bilayer; the sequence is LFVTLTLILGATFFVIHKFGL. Residues 727-776 lie on the Cytoplasmic side of the membrane; that stretch reads WGPVVNVVQSAVGETRTAIKDKLRQFVVEDHEVKESFEMKDFSKNEQKEK.

It belongs to the TRAFAC class dynamin-like GTPase superfamily. GB1/RHD3 GTPase family. RHD3 subfamily. As to quaternary structure, interacts with RTN1 and YOP1; GTP binding is not required for these interactions.

It localises to the endoplasmic reticulum membrane. Functionally, cooperates with the reticulon proteins RTN1 and RTN2 and the tubule-shaping DP1 family protein YOP1 to generate and maintain the structure of the tubular endoplasmic reticulum network. Has GTPase activity, which is required for its function in ER organization. The chain is Protein SEY1 from Saccharomyces cerevisiae (strain AWRI1631) (Baker's yeast).